Consider the following 335-residue polypeptide: Anthranilate phosphoribosyltransferase (335 aa).

5-phospho-alpha-D-ribose 1-diphosphate contacts are provided by residues glycine 79, 82–83 (GD), threonine 87, 89–92 (NIST), 107–115 (KHCNQGVSS), and serine 119. Position 79 (glycine 79) interacts with anthranilate. Serine 91 contributes to the Mg(2+) binding site. Position 110 (asparagine 110) interacts with anthranilate. Residue arginine 165 coordinates anthranilate. Mg(2+)-binding residues include aspartate 223 and glutamate 224.

Belongs to the anthranilate phosphoribosyltransferase family. As to quaternary structure, homodimer. It depends on Mg(2+) as a cofactor.

The catalysed reaction is N-(5-phospho-beta-D-ribosyl)anthranilate + diphosphate = 5-phospho-alpha-D-ribose 1-diphosphate + anthranilate. Its pathway is amino-acid biosynthesis; L-tryptophan biosynthesis; L-tryptophan from chorismate: step 2/5. In terms of biological role, catalyzes the transfer of the phosphoribosyl group of 5-phosphorylribose-1-pyrophosphate (PRPP) to anthranilate to yield N-(5'-phosphoribosyl)-anthranilate (PRA). In Buchnera aphidicola subsp. Diuraphis noxia, this protein is Anthranilate phosphoribosyltransferase.